The chain runs to 339 residues: Phenylalanine--tRNA ligase alpha subunit (339 aa).

Glu-247 lines the Mg(2+) pocket.

Belongs to the class-II aminoacyl-tRNA synthetase family. Phe-tRNA synthetase alpha subunit type 1 subfamily. As to quaternary structure, tetramer of two alpha and two beta subunits. Requires Mg(2+) as cofactor.

The protein resides in the cytoplasm. It catalyses the reaction tRNA(Phe) + L-phenylalanine + ATP = L-phenylalanyl-tRNA(Phe) + AMP + diphosphate + H(+). This is Phenylalanine--tRNA ligase alpha subunit from Deinococcus deserti (strain DSM 17065 / CIP 109153 / LMG 22923 / VCD115).